Here is an 85-residue protein sequence, read N- to C-terminus: MSSGGLLLLLGLLTLWAELTPVSSRKRHPDCDKPPDTRICQTVVRAFYYKPSEKRCVQFRYGGCKGNGNHFKSDHLCRCECLEYR.

An N-terminal signal peptide occupies residues methionine 1–serine 24. Residues cysteine 31–cysteine 81 form the BPTI/Kunitz inhibitor domain. Disulfide bonds link cysteine 31–cysteine 81, cysteine 40–cysteine 64, and cysteine 56–cysteine 77.

This sequence belongs to the venom Kunitz-type family. In terms of assembly, heterodimer; disulfide-linked. The A chain has phospholipase A2 activity and the B chain shows homology with the basic protease inhibitors. Expressed by the venom gland.

The protein resides in the secreted. Beta-bungarotoxin is a presynaptic neurotoxin of the venom. The B chain is homologous to venom basic protease inhibitors but has no protease inhibitor activity and is non-toxic. The polypeptide is Kunitz-type serine protease inhibitor homolog beta-bungarotoxin B3 chain (Bungarus candidus (Malayan krait)).